The chain runs to 62 residues: Negative regulatory protein YxlE (62 aa).

Transmembrane regions (helical) follow at residues 7 to 27 (MILP…ISCI) and 37 to 57 (WMWA…FFTV).

Its subcellular location is the cell membrane. Functionally, together with YxlD is important for negative regulation of sigma Y activity. The sequence is that of Negative regulatory protein YxlE (yxlE) from Bacillus subtilis (strain 168).